The chain runs to 312 residues: Probable deoxyhypusine synthase (312 aa).

The active-site Nucleophile is the Lys-285.

Belongs to the deoxyhypusine synthase family. Requires NAD(+) as cofactor.

The enzyme catalyses [eIF5A protein]-L-lysine + spermidine = [eIF5A protein]-deoxyhypusine + propane-1,3-diamine. It functions in the pathway protein modification; eIF5A hypusination. In terms of biological role, catalyzes the NAD-dependent oxidative cleavage of spermidine and the subsequent transfer of the butylamine moiety of spermidine to the epsilon-amino group of a specific lysine residue of the eIF-5A precursor protein to form the intermediate deoxyhypusine residue. This is Probable deoxyhypusine synthase from Saccharolobus islandicus (strain Y.N.15.51 / Yellowstone #2) (Sulfolobus islandicus).